The chain runs to 61 residues: Large ribosomal subunit protein bL28 (61 aa).

Belongs to the bacterial ribosomal protein bL28 family.

In Nautilia profundicola (strain ATCC BAA-1463 / DSM 18972 / AmH), this protein is Large ribosomal subunit protein bL28.